The sequence spans 201 residues: Casparian strip membrane protein 7 (201 aa).

The span at 1–11 (MEAGEEIEDGE) shows a compositional bias: acidic residues. Residues 1–26 (MEAGEEIEDGEPSTPTYKAHHPPPHL) form a disordered region. Residues 1–34 (MEAGEEIEDGEPSTPTYKAHHPPPHLPPPMRSSG) are Cytoplasmic-facing. The chain crosses the membrane as a helical span at residues 35 to 55 (VSLVLSVADLVLRFVAIGGTA). Over 56–86 (GSAIAMATTSETLPFAAPFVRFRAEYSDLPT) the chain is Extracellular. A helical membrane pass occupies residues 87 to 107 (LMFFVVASSVVCAYLVLSLPA). Topologically, residues 108-128 (SVVHVVRPGARSSRAILAFLD) are cytoplasmic. A helical transmembrane segment spans residues 129 to 149 (TVMLALLTASASAAAAIVYLA). Topologically, residues 150-171 (HRGSARANWLGICQQFTSFCQR) are extracellular. Residues 172-192 (ITASLVGSFAAAVVLVALVFL) form a helical membrane-spanning segment. The Cytoplasmic segment spans residues 193 to 201 (SALSLARRA).

It belongs to the Casparian strip membrane proteins (CASP) family. In terms of assembly, homodimer and heterodimers.

The protein localises to the cell membrane. Its function is as follows. Regulates membrane-cell wall junctions and localized cell wall deposition. Required for establishment of the Casparian strip membrane domain (CSD) and the subsequent formation of Casparian strips, a cell wall modification of the root endodermis that determines an apoplastic barrier between the intraorganismal apoplasm and the extraorganismal apoplasm and prevents lateral diffusion. The chain is Casparian strip membrane protein 7 from Oryza sativa subsp. japonica (Rice).